The primary structure comprises 351 residues: Renin receptor (351 aa).

Residues 1 to 17 (MAVLVVFLSFLVADVFG) form the signal peptide. At 18-303 (NEFSILRSPG…YNLAYKYNFE (286 aa)) the chain is on the extracellular side. The chain crosses the membrane as a helical span at residues 304-324 (YPVVFNLVLWIMIGLALTLIV). Over 325-351 (TCYNIWNMDPGYDSIIYRMTNQKIRMD) the chain is Cytoplasmic. The Mediates retrograde transport to the ER motif lies at 347 to 351 (KIRMD).

Interacts with renin. Accessory component of the multisubunit proton-transporting vacuolar (V)-ATPase protein pump. Interacts (via N-terminus) with ATP6AP1 (via N-terminus). Interacts with ATP6V0D1; ATP6V0D1 is a V-ATPase complex subunit and the interaction promotes V-ATPase complex assembly. Interacts with TMEM9; TMEM9 is a V-ATPase assembly regulator and the interaction induces the interaction with ATP6V0D1. Interacts with VMA21 (via N-terminus); VMA21 is a V-ATPase accessory component. Post-translationally, phosphorylated. In terms of processing, proteolytically cleaved by a furin-like convertase in the trans-Golgi network to generate N- and C-terminal fragments. Expressed in the brain.

The protein localises to the endoplasmic reticulum membrane. Its subcellular location is the lysosome membrane. It is found in the cytoplasmic vesicle. The protein resides in the autophagosome membrane. It localises to the cell projection. The protein localises to the dendritic spine membrane. Its subcellular location is the axon. It is found in the endosome membrane. The protein resides in the clathrin-coated vesicle membrane. It localises to the secretory vesicle. The protein localises to the synaptic vesicle membrane. Multifunctional protein which functions as a renin, prorenin cellular receptor and is involved in the assembly of the lysosomal proton-transporting V-type ATPase (V-ATPase) and the acidification of the endo-lysosomal system. May mediate renin-dependent cellular responses by activating ERK1 and ERK2. By increasing the catalytic efficiency of renin in AGT/angiotensinogen conversion to angiotensin I, may also play a role in the renin-angiotensin system (RAS). Through its function in V-type ATPase (v-ATPase) assembly and acidification of the lysosome it regulates protein degradation and may control different signaling pathways important for proper brain development, synapse morphology and synaptic transmission. This chain is Renin receptor (ATP6AP2), found in Bos taurus (Bovine).